The chain runs to 1331 residues: Xanthine dehydrogenase/oxidase (1331 aa).

In terms of domain architecture, 2Fe-2S ferredoxin-type spans 4–91; sequence DELVFFVNGK…HVAVTTVEGI (88 aa). [2Fe-2S] cluster is bound by residues C43, C48, C51, C73, C113, C116, C148, and C150. Positions 229 to 412 constitute an FAD-binding PCMH-type domain; it reads FEGERVTWIQ…LSIEIPYSRE (184 aa). FAD-binding positions include 257 to 264, F335, 345 to 349, D358, L402, and K420; these read LVVGNTEI and SIGGN. C534 and C991 form a disulfide bridge. Positions 766 and 797 each coordinate Mo-molybdopterin. The substrate site is built by E801 and R879. Residue R911 participates in Mo-molybdopterin binding. Positions 913 and 1009 each coordinate substrate. A1078 lines the Mo-molybdopterin pocket. E1260 serves as the catalytic Proton acceptor.

This sequence belongs to the xanthine dehydrogenase family. In terms of assembly, homodimer. Interacts with BTN1A1. It depends on FAD as a cofactor. Mo-molybdopterin serves as cofactor. [2Fe-2S] cluster is required as a cofactor. In terms of processing, subject to partial proteolysis; this alters the enzyme from the dehydrogenase form (D) to the oxidase form (O). Post-translationally, contains sulfhydryl groups that are easily oxidized (in vitro); this alters the enzyme from the dehydrogenase form (D) to the oxidase form (O).

The protein resides in the cytoplasm. Its subcellular location is the peroxisome. The protein localises to the secreted. The catalysed reaction is xanthine + NAD(+) + H2O = urate + NADH + H(+). It catalyses the reaction hypoxanthine + NAD(+) + H2O = xanthine + NADH + H(+). The enzyme catalyses xanthine + O2 + H2O = urate + H2O2. Can be converted from the dehydrogenase form (D) to the oxidase form (O) irreversibly by proteolysis or reversibly through the oxidation of sulfhydryl groups. Its function is as follows. Key enzyme in purine degradation. Catalyzes the oxidation of hypoxanthine to xanthine. Catalyzes the oxidation of xanthine to uric acid. Contributes to the generation of reactive oxygen species. This chain is Xanthine dehydrogenase/oxidase (XDH), found in Felis catus (Cat).